The chain runs to 187 residues: Calcium and integrin-binding family member 2 (187 aa).

EF-hand domains follow at residues Arg66–Ser101, Pro103–Ser138, and Glu144–Phe179. The Ca(2+) site is built by Asp116, Asn118, Asp120, Asp127, Asp157, Asp159, Asp161, Lys163, and Asp168.

Monomer. Homodimer. Interacts with WHRN and MYO7A. Interacts with ITGA2B (via C-terminus cytoplasmic tail region); this interaction is stabilized/increased in a calcium and magnesium-dependent manner. Interacts with ITGA7 (via C-terminus cytoplasmic tail region); this interaction is stabilized/increased in a calcium and magnesium-dependent manner. Interacts with TMC1. Interacts with TMC2. Interacts with PIEZO1. As to expression, expressed in inner and outer segments of photoreceptor cells, as well as in the pigmented epithelium. Also observed in the inner and outer plexiform layers and in the ganglion cell layer (at protein level). Expressed in sensory hair cell stereocilia, with expression mainly at the basal body of the kinocilium and in the hair bundle stereocilia; and the apical surface of hair cells (at protein level). Located in the tip region of the stereocilia and at the apical surface of hair cells around the cuticular plate (at protein level). Not expressed in the hair bundles of the vestibular hair cells. Strongly expressed in skeletal muscles, brain, kidney and liver. Expressed in the skeletal muscle, retina and cochlea. Expressed in megakaryocytes and endothelial cells. Expressed in heart, spleen, lung, and inner ear. In the inner ear, expressed in the vestibule, basilar membrane and spiral ganglion cells. Expressed in the supporting cells in both the organ of Corti and the vestibular sensory epithelia.

Its subcellular location is the cytoplasm. It is found in the cell projection. The protein localises to the stereocilium. It localises to the photoreceptor inner segment. The protein resides in the cilium. Its subcellular location is the photoreceptor outer segment. It is found in the cell membrane. The protein localises to the sarcolemma. Functionally, calcium- and integrin-binding protein that plays a role in intracellular calcium homeostasis. Acts as an auxiliary subunit of the sensory mechanoelectrical transduction (MET) channel in hair cells. Essential for mechanoelectrical transduction (MET) currents in auditory hair cells and thereby required for hearing. Regulates the function of hair cell mechanotransduction by controlling the distribution of transmembrane channel-like proteins TMC1 and TMC2, and by regulating the function of the MET channels in hair cells. Required for the maintenance of auditory hair cell stereocilia bundle morphology and function and for hair-cell survival in the cochlea. Critical for proper photoreceptor cell maintenance and function. Plays a role in intracellular calcium homeostasis by decreasing ATP-induced calcium release. Seems to be dispensable for vestibular functions. The protein is Calcium and integrin-binding family member 2 (Cib2) of Mus musculus (Mouse).